Reading from the N-terminus, the 105-residue chain is Protein FAM24A (105 aa).

Positions 1 to 32 (MAKMFDLRTKIMIGIGSSLLVAAMVLLSVVFC) are cleaved as a signal peptide.

Belongs to the FAM24 family.

It is found in the secreted. This is Protein FAM24A (FAM24A) from Homo sapiens (Human).